The primary structure comprises 215 residues: ATP-dependent Clp protease proteolytic subunit (215 aa).

Catalysis depends on serine 111, which acts as the Nucleophile. Histidine 136 is an active-site residue.

Belongs to the peptidase S14 family. In terms of assembly, fourteen ClpP subunits assemble into 2 heptameric rings which stack back to back to give a disk-like structure with a central cavity, resembling the structure of eukaryotic proteasomes.

The protein resides in the cytoplasm. It carries out the reaction Hydrolysis of proteins to small peptides in the presence of ATP and magnesium. alpha-casein is the usual test substrate. In the absence of ATP, only oligopeptides shorter than five residues are hydrolyzed (such as succinyl-Leu-Tyr-|-NHMec, and Leu-Tyr-Leu-|-Tyr-Trp, in which cleavage of the -Tyr-|-Leu- and -Tyr-|-Trp bonds also occurs).. Cleaves peptides in various proteins in a process that requires ATP hydrolysis. Has a chymotrypsin-like activity. Plays a major role in the degradation of misfolded proteins. This is ATP-dependent Clp protease proteolytic subunit from Hamiltonella defensa subsp. Acyrthosiphon pisum (strain 5AT).